The chain runs to 477 residues: Putative BTB/POZ domain-containing protein R830 (477 aa).

Residues Ser-13–Pro-83 enclose the BTB domain.

The protein belongs to the mimivirus BTB/WD family.

The polypeptide is Putative BTB/POZ domain-containing protein R830 (Acanthamoeba polyphaga mimivirus (APMV)).